Reading from the N-terminus, the 127-residue chain is MQKTSIPDFQITAKVVYVPSESRPDEGYHFFAYKITITNTGSTPAQLMSRHWVITDALGKKEEVRGPGVVGLQPKIQPGQTFEYDSACPLTTSTGSMVGRYFFVGESGESFSVEVPEFYLIAPLALH.

Residues Lys-3–His-127 form the ApaG domain.

This is Protein ApaG from Bdellovibrio bacteriovorus (strain ATCC 15356 / DSM 50701 / NCIMB 9529 / HD100).